Consider the following 503-residue polypeptide: Arabinose import ATP-binding protein AraG 1 (503 aa).

2 ABC transporter domains span residues 5–240 (LRFD…MVGR) and 251–497 (RALG…LPQT). 37–44 (GENGAGKS) provides a ligand contact to ATP.

The protein belongs to the ABC transporter superfamily. Arabinose importer (TC 3.A.1.2.2) family. As to quaternary structure, the complex is composed of two ATP-binding proteins (AraG), two transmembrane proteins (AraH) and a solute-binding protein (AraF).

It is found in the cell inner membrane. The enzyme catalyses L-arabinose(out) + ATP + H2O = L-arabinose(in) + ADP + phosphate + H(+). Functionally, part of the ABC transporter complex AraFGH involved in arabinose import. Responsible for energy coupling to the transport system. The protein is Arabinose import ATP-binding protein AraG 1 of Burkholderia ambifaria (strain ATCC BAA-244 / DSM 16087 / CCUG 44356 / LMG 19182 / AMMD) (Burkholderia cepacia (strain AMMD)).